Reading from the N-terminus, the 296-residue chain is Ribosomal RNA small subunit methyltransferase J (296 aa).

Asp-205 serves as a coordination point for S-adenosyl-L-methionine.

The protein belongs to the methyltransferase superfamily. RsmJ family.

The protein localises to the cytoplasm. The catalysed reaction is guanosine(1516) in 16S rRNA + S-adenosyl-L-methionine = N(2)-methylguanosine(1516) in 16S rRNA + S-adenosyl-L-homocysteine + H(+). Its function is as follows. Specifically methylates the guanosine in position 1516 of 16S rRNA. This Psychrobacter arcticus (strain DSM 17307 / VKM B-2377 / 273-4) protein is Ribosomal RNA small subunit methyltransferase J.